Reading from the N-terminus, the 251-residue chain is Phosphate import ATP-binding protein PstB 2 (251 aa).

An ABC transporter domain is found at 5-246; the sequence is LTTENLSLFY…PVKQETNDYI (242 aa). Position 37 to 44 (37 to 44) interacts with ATP; sequence GPSGCGKS.

It belongs to the ABC transporter superfamily. Phosphate importer (TC 3.A.1.7) family. As to quaternary structure, the complex is composed of two ATP-binding proteins (PstB), two transmembrane proteins (PstC and PstA) and a solute-binding protein (PstS).

It is found in the cell membrane. It catalyses the reaction phosphate(out) + ATP + H2O = ADP + 2 phosphate(in) + H(+). In terms of biological role, part of the ABC transporter complex PstSACB involved in phosphate import. Responsible for energy coupling to the transport system. The chain is Phosphate import ATP-binding protein PstB 2 from Lactiplantibacillus plantarum (strain ATCC BAA-793 / NCIMB 8826 / WCFS1) (Lactobacillus plantarum).